We begin with the raw amino-acid sequence, 203 residues long: NAD(P)H dehydrogenase (quinone) (203 aa).

The Flavodoxin-like domain maps to 3–194 (VLIPFYSMYG…AGARYQGKYI (192 aa)). FMN contacts are provided by residues 9 to 14 (SMYGHI) and 82 to 84 (TRF). Tyrosine 11 is a binding site for NAD(+). Substrate is bound at residue tryptophan 102. FMN is bound by residues 117–123 (SSATQHG) and histidine 138.

Belongs to the WrbA family. It depends on FMN as a cofactor.

It catalyses the reaction a quinone + NADH + H(+) = a quinol + NAD(+). The catalysed reaction is a quinone + NADPH + H(+) = a quinol + NADP(+). This is NAD(P)H dehydrogenase (quinone) from Geobacter metallireducens (strain ATCC 53774 / DSM 7210 / GS-15).